A 341-amino-acid polypeptide reads, in one-letter code: uncharacterized protein (341 aa).

It belongs to the cycloisomerase 2 family.

This is an uncharacterized protein from Lactococcus lactis subsp. lactis (strain IL1403) (Streptococcus lactis).